We begin with the raw amino-acid sequence, 92 residues long: Probable glutathione transferase (92 aa).

One can recognise a GST N-terminal domain in the interval 1 to 71; that stretch reads RTCPYAQRAR…YLEEAFPDPP (71 aa). The active-site Nucleophile is the Cys-3. Glutathione contacts are provided by residues Lys-30, Val-43, and 55–56; that span reads ES.

The protein belongs to the GST superfamily. Omega family.

The enzyme catalyses RX + glutathione = an S-substituted glutathione + a halide anion + H(+). It carries out the reaction L-dehydroascorbate + 2 glutathione = glutathione disulfide + L-ascorbate. The catalysed reaction is methylarsonate + 2 glutathione + H(+) = methylarsonous acid + glutathione disulfide + H2O. Its function is as follows. Exhibits glutathione-dependent thiol transferase activity. Has dehydroascorbate reductase activity and may contribute to the recycling of ascorbic acid. Participates in the biotransformation of inorganic arsenic and reduces monomethylarsonic acid (MMA). This is Probable glutathione transferase from Aplysia californica (California sea hare).